Here is a 224-residue protein sequence, read N- to C-terminus: tRNA (guanine-N(7)-)-methyltransferase (224 aa).

S-adenosyl-L-methionine is bound by residues glutamate 54, glutamate 79, glutamate 106, and aspartate 129. Aspartate 129 is a catalytic residue. Positions 133 and 165 each coordinate substrate.

The protein belongs to the class I-like SAM-binding methyltransferase superfamily. TrmB family.

It catalyses the reaction guanosine(46) in tRNA + S-adenosyl-L-methionine = N(7)-methylguanosine(46) in tRNA + S-adenosyl-L-homocysteine. It participates in tRNA modification; N(7)-methylguanine-tRNA biosynthesis. Its function is as follows. Catalyzes the formation of N(7)-methylguanine at position 46 (m7G46) in tRNA. This chain is tRNA (guanine-N(7)-)-methyltransferase, found in Chlamydia abortus (strain DSM 27085 / S26/3) (Chlamydophila abortus).